The chain runs to 329 residues: DNA-directed RNA polymerase subunit alpha (329 aa).

The segment at 1 to 231 (MQNSLLKPKA…EQLAVFAQLE (231 aa)) is alpha N-terminal domain (alpha-NTD). The tract at residues 249–329 (FDPILLRPVD…SWPPAALEKR (81 aa)) is alpha C-terminal domain (alpha-CTD).

The protein belongs to the RNA polymerase alpha chain family. As to quaternary structure, homodimer. The RNAP catalytic core consists of 2 alpha, 1 beta, 1 beta' and 1 omega subunit. When a sigma factor is associated with the core the holoenzyme is formed, which can initiate transcription.

It carries out the reaction RNA(n) + a ribonucleoside 5'-triphosphate = RNA(n+1) + diphosphate. Its function is as follows. DNA-dependent RNA polymerase catalyzes the transcription of DNA into RNA using the four ribonucleoside triphosphates as substrates. This is DNA-directed RNA polymerase subunit alpha from Albidiferax ferrireducens (strain ATCC BAA-621 / DSM 15236 / T118) (Rhodoferax ferrireducens).